The chain runs to 157 residues: NADPH-dependent 7-cyano-7-deazaguanine reductase (157 aa).

Cys55 acts as the Thioimide intermediate in catalysis. Catalysis depends on Asp62, which acts as the Proton donor. Substrate-binding positions include 77-79 (VES) and 96-97 (HE).

It belongs to the GTP cyclohydrolase I family. QueF type 1 subfamily.

The protein localises to the cytoplasm. The catalysed reaction is 7-aminomethyl-7-carbaguanine + 2 NADP(+) = 7-cyano-7-deazaguanine + 2 NADPH + 3 H(+). Its pathway is tRNA modification; tRNA-queuosine biosynthesis. Its function is as follows. Catalyzes the NADPH-dependent reduction of 7-cyano-7-deazaguanine (preQ0) to 7-aminomethyl-7-deazaguanine (preQ1). This is NADPH-dependent 7-cyano-7-deazaguanine reductase from Neisseria meningitidis serogroup C / serotype 2a (strain ATCC 700532 / DSM 15464 / FAM18).